We begin with the raw amino-acid sequence, 551 residues long: DNA double-strand break repair helicase HerA (551 aa).

Residues R152, 161–166 (GAGKSN), and 507–508 (RI) contribute to the ATP site.

It belongs to the HerA family. As to quaternary structure, homohexamer. Interacts with NurA.

It carries out the reaction Couples ATP hydrolysis with the unwinding of duplex DNA at the replication fork by translocating in the 5'-3' direction. This creates two antiparallel DNA single strands (ssDNA). The leading ssDNA polymer is the template for DNA polymerase III holoenzyme which synthesizes a continuous strand.. The catalysed reaction is ATP + H2O = ADP + phosphate + H(+). The enzyme catalyses Couples ATP hydrolysis with the unwinding of duplex DNA by translocating in the 3'-5' direction.. Its activity is regulated as follows. Helicase activity is stimulated in the presence of NurA. Functionally, involved in DNA double-strand break (DSB) repair. Probably acts with NurA to stimulate resection of the 5' strand and produce the long 3' single-strand that is required for RadA loading. Has DNA-dependent ATPase activity and DNA helicase activity. In Pyrococcus furiosus (strain ATCC 43587 / DSM 3638 / JCM 8422 / Vc1), this protein is DNA double-strand break repair helicase HerA.